The sequence spans 470 residues: Probable E3 ubiquitin-protein ligase TRIML1 (470 aa).

The RING-type zinc-finger motif lies at 22–63 (CFICLDYFSSPVTTECGHSFCLMCLLKSWEEHNTPLSCPECW). Coiled-coil stretches lie at residues 135–170 (SEAEEQHKEKLQDIINILRKKKKEVQAILNHEKERV) and 196–235 (KEEEQLQLQLLEREEKANMKKLRENEIQLTQQIRRLGKMI). The B30.2/SPRY domain maps to 273–470 (TELSLCHITG…NTDPLIICHI (198 aa)).

Interacts with USP5. As to expression, testis.

It catalyses the reaction S-ubiquitinyl-[E2 ubiquitin-conjugating enzyme]-L-cysteine + [acceptor protein]-L-lysine = [E2 ubiquitin-conjugating enzyme]-L-cysteine + N(6)-ubiquitinyl-[acceptor protein]-L-lysine.. The protein operates within protein modification; protein ubiquitination. In terms of biological role, probable E3 ubiquitin-protein ligase which plays an important role in blastocyst development. Involved in progression of blastocyst stage and subsequent embryo development. The polypeptide is Probable E3 ubiquitin-protein ligase TRIML1 (Triml1) (Mus musculus (Mouse)).